A 490-amino-acid polypeptide reads, in one-letter code: Glutamyl-tRNA(Gln) amidotransferase subunit A (490 aa).

Active-site charge relay system residues include Lys-78 and Ser-158. A disordered region spans residues 131-159 (SNETSRFGPPINPWRRKGDNAGLTPGGSS). The Acyl-ester intermediate role is filled by Ser-182.

Belongs to the amidase family. GatA subfamily. In terms of assembly, heterotrimer of A, B and C subunits.

The enzyme catalyses L-glutamyl-tRNA(Gln) + L-glutamine + ATP + H2O = L-glutaminyl-tRNA(Gln) + L-glutamate + ADP + phosphate + H(+). Its function is as follows. Allows the formation of correctly charged Gln-tRNA(Gln) through the transamidation of misacylated Glu-tRNA(Gln) in organisms which lack glutaminyl-tRNA synthetase. The reaction takes place in the presence of glutamine and ATP through an activated gamma-phospho-Glu-tRNA(Gln). This Hyphomonas neptunium (strain ATCC 15444) protein is Glutamyl-tRNA(Gln) amidotransferase subunit A.